The primary structure comprises 195 residues: FMN-dependent NADH:quinone oxidoreductase (195 aa).

FMN is bound by residues serine 9, 15-17, 85-88, and 129-132; these read SVS, MYNF, and SRGG.

This sequence belongs to the azoreductase type 1 family. In terms of assembly, homodimer. FMN is required as a cofactor.

It carries out the reaction 2 a quinone + NADH + H(+) = 2 a 1,4-benzosemiquinone + NAD(+). The catalysed reaction is N,N-dimethyl-1,4-phenylenediamine + anthranilate + 2 NAD(+) = 2-(4-dimethylaminophenyl)diazenylbenzoate + 2 NADH + 2 H(+). Quinone reductase that provides resistance to thiol-specific stress caused by electrophilic quinones. In terms of biological role, also exhibits azoreductase activity. Catalyzes the reductive cleavage of the azo bond in aromatic azo compounds to the corresponding amines. In Stenotrophomonas maltophilia (strain K279a), this protein is FMN-dependent NADH:quinone oxidoreductase.